A 337-amino-acid polypeptide reads, in one-letter code: Mycothiol acetyltransferase (337 aa).

2 consecutive N-acetyltransferase domains span residues 11 to 151 (LDER…FELP) and 154 to 337 (VRLR…MYRK). Residue Glu-37 participates in 1D-myo-inositol 2-(L-cysteinylamino)-2-deoxy-alpha-D-glucopyranoside binding. Position 81–83 (81–83 (LVI)) interacts with acetyl-CoA. A 1D-myo-inositol 2-(L-cysteinylamino)-2-deoxy-alpha-D-glucopyranoside-binding site is contributed by Glu-182. The tract at residues 210 to 246 (RPTGSGDGDVADGGSTDGGPADSGSADGGAGEGGTGD) is disordered. Low complexity predominate over residues 221 to 234 (DGGSTDGGPADSGS). Gly residues predominate over residues 235–246 (ADGGAGEGGTGD). The 1D-myo-inositol 2-(L-cysteinylamino)-2-deoxy-alpha-D-glucopyranoside site is built by Lys-257 and Glu-271. Residues 275-277 (VGV) and 282-288 (QGGGLGR) contribute to the acetyl-CoA site. Position 309 (Tyr-309) interacts with 1D-myo-inositol 2-(L-cysteinylamino)-2-deoxy-alpha-D-glucopyranoside. An acetyl-CoA-binding site is contributed by 314-319 (NTAAIR).

It belongs to the acetyltransferase family. MshD subfamily. In terms of assembly, monomer.

The catalysed reaction is 1D-myo-inositol 2-(L-cysteinylamino)-2-deoxy-alpha-D-glucopyranoside + acetyl-CoA = mycothiol + CoA + H(+). Its function is as follows. Catalyzes the transfer of acetyl from acetyl-CoA to desacetylmycothiol (Cys-GlcN-Ins) to form mycothiol. The protein is Mycothiol acetyltransferase of Streptosporangium roseum (strain ATCC 12428 / DSM 43021 / JCM 3005 / KCTC 9067 / NCIMB 10171 / NRRL 2505 / NI 9100).